We begin with the raw amino-acid sequence, 323 residues long: CTD kinase subunit beta (323 aa).

The protein belongs to the cyclin family. As to quaternary structure, CTDK-I consists of three subunits, CTK1, CTK2 and CTK3 (also called alpha, beta and gamma). Interacts with CTK1. Heterodimerization with CTK3 is required to protect this subunit from degradation. Phosphorylated. Ubiquitinated. Phosphorylation and ubiquitination lead to degradation in growth-related way by the ubiquitin-proteasome pathway. Neither phosphorylation nor degradation requires association with CTK1.

It is found in the nucleus. The protein resides in the nucleolus. Functionally, cyclin subunit of the CTDK-I complex, which hyperphosphorylates the C-terminal heptapeptide repeat domain (CTD) of the largest RNA polymerase II subunit. CTDK-I phosphorylates 'Ser-5' if the CTD substrate is not phosphorylated at 'Ser-5', but will phosphorylate 'Ser-2' of a CTD substrate if 'Ser-5' is already phosphorylated. CTDK-I is also more reactive toward substrates that are prephosphorylated at 'Ser-2' or 'Ser-5' compared with an unphosphorylated CTD substrate, therefore efficiently creating doubly phosphorylated CTD repeats. Involved in RNA polymerase II transcriptional elongation, and as part of the CTDK-I complex, pre-mRNA 3'-end processing and SET2 mediated H3K36 methylation. Together with CTK3, required for CTK1 CTD kinase activation. Required for DNA damage induced transcription. Involved in the adaptation to alternative carbon sources, including galactose, glycerol and ethanol, but not raffinose. Required for the integrity of the rDNA locus. The sequence is that of CTD kinase subunit beta (CTK2) from Saccharomyces cerevisiae (strain ATCC 204508 / S288c) (Baker's yeast).